Consider the following 345-residue polypeptide: tRNA-dihydrouridine(20/20a) synthase (345 aa).

Residues 26-28 (PML) and Gln-78 contribute to the FMN site. Cys-108 functions as the Proton donor in the catalytic mechanism. FMN-binding positions include Lys-147, His-180, 220–222 (NGG), and 242–243 (GR).

This sequence belongs to the Dus family. DusA subfamily. FMN serves as cofactor.

It carries out the reaction 5,6-dihydrouridine(20) in tRNA + NADP(+) = uridine(20) in tRNA + NADPH + H(+). The enzyme catalyses 5,6-dihydrouridine(20) in tRNA + NAD(+) = uridine(20) in tRNA + NADH + H(+). It catalyses the reaction 5,6-dihydrouridine(20a) in tRNA + NADP(+) = uridine(20a) in tRNA + NADPH + H(+). The catalysed reaction is 5,6-dihydrouridine(20a) in tRNA + NAD(+) = uridine(20a) in tRNA + NADH + H(+). Catalyzes the synthesis of 5,6-dihydrouridine (D), a modified base found in the D-loop of most tRNAs, via the reduction of the C5-C6 double bond in target uridines. Specifically modifies U20 and U20a in tRNAs. In Yersinia pestis, this protein is tRNA-dihydrouridine(20/20a) synthase.